The sequence spans 558 residues: Inositol-3-phosphate synthase 1 (558 aa).

NAD(+) is bound by residues G67, G68, N69, N70, D141, S177, V178, Q188, R191, T228, A229, N230, T231, G278, S279, D303, S306, N337, N338, D339, and K352. A Phosphoserine modification is found at S279. At S357 the chain carries Phosphoserine. NAD(+)-binding residues include G390, D391, D419, and S420. The tract at residues 537 to 558 (ATNGCTGDANGHLQEEPPMPTT) is disordered.

This sequence belongs to the myo-inositol 1-phosphate synthase family. NAD(+) serves as cofactor. Post-translationally, phosphorylation at Ser-279 and Ser-357 may be associated with a decrease in activity. Highly expressed in testis, ovary, heart, placenta and pancreas. Weakly expressed in blood leukocyte, thymus, skeletal muscle and colon.

The protein resides in the cytoplasm. It carries out the reaction D-glucose 6-phosphate = 1D-myo-inositol 3-phosphate. Its pathway is polyol metabolism; myo-inositol biosynthesis; myo-inositol from D-glucose 6-phosphate: step 1/2. Inhibited by mood-stabilizing drugs such as valproate (VPA) and lithium. Functionally, key enzyme in myo-inositol biosynthesis pathway that catalyzes the conversion of glucose 6-phosphate to 1-myo-inositol 1-phosphate in a NAD-dependent manner. Rate-limiting enzyme in the synthesis of all inositol-containing compounds. The chain is Inositol-3-phosphate synthase 1 (ISYNA1) from Homo sapiens (Human).